Here is a 558-residue protein sequence, read N- to C-terminus: Alpha-1,3-mannosyltransferase MNT2 (558 aa).

Over 1 to 6 (MRRKNR) the chain is Cytoplasmic. The chain crosses the membrane as a helical; Signal-anchor for type II membrane protein span at residues 7-27 (LFILVVLLGIVLVVYYSQLNS). Topologically, residues 28-558 (LDLVEPVQSS…QIVDIWNKDI (531 aa)) are lumenal. N-linked (GlcNAc...) asparagine glycosylation is present at Asn187.

It belongs to the MNN1/MNT family.

Its subcellular location is the golgi apparatus membrane. It functions in the pathway protein modification; protein glycosylation. In terms of biological role, mannosyltransferase involved in adding the 4th and 5th mannose residues of O-linked glycans. This chain is Alpha-1,3-mannosyltransferase MNT2 (MNT2), found in Saccharomyces cerevisiae (strain ATCC 204508 / S288c) (Baker's yeast).